We begin with the raw amino-acid sequence, 638 residues long: Ubiquilin-2 (638 aa).

Residues 1–26 (MAENGESSGPPRPSRGPAAAPGAASP) are compositionally biased toward low complexity. Disordered stretches follow at residues 1–31 (MAEN…AEPK) and 107–158 (RPQG…SSFG). Position 2 is an N-acetylalanine (Ala-2). The residue at position 25 (Ser-25) is a Phosphoserine. In terms of domain architecture, Ubiquitin-like spans 33 to 107 (IKVTVKTPKE…VHLVIKSQNR (75 aa)). Over residues 112–158 (ATTQPSTTAGTSTTTTTTTTAAAPAATTSSAPRSSSTPTTTNSSSFG) the composition is skewed to low complexity. 2 consecutive STI1 domains span residues 189 to 217 (SPEM…QLIM) and 219 to 258 (NPQM…MQEM). The segment at 298–364 (FGGNPFATVG…SGSSSSSTTA (67 aa)) is disordered. Residues 305-316 (TVGSSSTSGEGT) are compositionally biased toward low complexity. Over residues 327 to 336 (LPNPWAPPPT) the composition is skewed to pro residues. Positions 337-364 (TQTAATTTTTTTTSSGSGSGSSSSSTTA) are enriched in low complexity. STI1 domains lie at 393 to 440 (NPQL…QEQM) and 444 to 476 (LPNF…QQGL). A run of 11 repeats spans residues 505–507 (PVG), 508–510 (PVT), 511–513 (PIG), 514–516 (PIG), 517–519 (PIV), 520–522 (PFT), 523–525 (PIG), 526–528 (PIG), 529–531 (PIG), 532–533 (PT), and 535–537 (PAS). Residues 505-537 (PVGPVTPIGPIGPIVPFTPIGPIGPIGPTGPAS) are 11 X 3 AA tandem repeats P-X-X. The interval 528-570 (GPIGPTGPASSPGSTGTGIPPATTVSSSAPTETISPTSESGPN) is disordered. Over residues 533–551 (TGPASSPGSTGTGIPPATT) the composition is skewed to low complexity. The segment covering 552-570 (VSSSAPTETISPTSESGPN) has biased composition (polar residues). The region spanning 589-635 (PPNPEVRFQQQLEQLNAMGFLNREANLQALIATGGDINAAIERLLGS) is the UBA domain.

Homodimer. Forms heterodimer with UBQLN1. Binds UBE3A and BTRC. Interacts with the 19S proteasome subunit. Interacts with C9orf72. Binds CD47. Interacts with HNRNPA1 and HNRNPU. Found in a complex with UBQLN1 and MAP1LC3A/B/C. Interacts with EPS15, EPN1 and EPN2. Interacts with HERPUD1. Interacts with RAD23A. Interacts with TARDBP. Interacts (via C-terminus) with FAF2 (via N-terminus). Interacts with UBQLN4. Degraded during macroautophagy. In terms of tissue distribution, highly expressed in smooth muscle. Expression in other tissues is very low.

It is found in the cytoplasm. The protein localises to the nucleus. The protein resides in the membrane. It localises to the cytoplasmic vesicle. Its subcellular location is the autophagosome. Plays an important role in the regulation of different protein degradation mechanisms and pathways including ubiquitin-proteasome system (UPS), autophagy and the endoplasmic reticulum-associated protein degradation (ERAD) pathway. Mediates the proteasomal targeting of misfolded or accumulated proteins for degradation by binding (via UBA domain) to their polyubiquitin chains and by interacting (via ubiquitin-like domain) with the subunits of the proteasome. Plays a role in the ERAD pathway via its interaction with ER-localized proteins FAF2/UBXD8 and HERPUD1 and may form a link between the polyubiquitinated ERAD substrates and the proteasome. Involved in the regulation of macroautophagy and autophagosome formation; required for maturation of autophagy-related protein LC3 from the cytosolic form LC3-I to the membrane-bound form LC3-II and may assist in the maturation of autophagosomes to autolysosomes by mediating autophagosome-lysosome fusion. Negatively regulates the endocytosis of GPCR receptors: AVPR2 and ADRB2, by specifically reducing the rate at which receptor-arrestin complexes concentrate in clathrin-coated pits (CCPs). Links CD47 to vimentin-containing intermediate filaments of the cytoskeleton. The chain is Ubiquilin-2 (Ubqln2) from Mus musculus (Mouse).